Reading from the N-terminus, the 848-residue chain is Adenylate cyclase (848 aa).

Residues 1–535 form a catalytic region; sequence MYLYIETLKQ…DVSHHFPLRL (535 aa). Residues 541 to 848 are regulatory; that stretch reads KALYSPCEIR…DTPLLQQYFS (308 aa). His609 is subject to Phosphohistidine; by CRR.

The protein belongs to the adenylyl cyclase class-1 family.

It is found in the cytoplasm. The enzyme catalyses ATP = 3',5'-cyclic AMP + diphosphate. The polypeptide is Adenylate cyclase (cyaA) (Escherichia coli O157:H7).